The chain runs to 81 residues: uncharacterized protein (81 aa).

This is an uncharacterized protein from Schizosaccharomyces pombe (strain 972 / ATCC 24843) (Fission yeast).